Here is a 241-residue protein sequence, read N- to C-terminus: Tubulin-like protein alpha-4B (241 aa).

Over residues 1-10 the composition is skewed to basic and acidic residues; sequence MRHQQTERQD. The segment at 1-20 is disordered; it reads MRHQQTERQDPSQPLSRQHG. Asp10 serves as a coordination point for GTP. Asp10 is a binding site for Mg(2+). A compositionally biased stretch (polar residues) spans 11-20; it reads PSQPLSRQHG. Positions 79, 83, 84, 118, 145, and 167 each coordinate GTP. The active site involves Glu193.

Belongs to the tubulin family. Mg(2+) is required as a cofactor. Post-translationally, some glutamate residues at the C-terminus are polyglutamylated, resulting in polyglutamate chains on the gamma-carboxyl group. Polyglutamylation plays a key role in microtubule severing by spastin (SPAST). SPAST preferentially recognizes and acts on microtubules decorated with short polyglutamate tails: severing activity by SPAST increases as the number of glutamates per tubulin rises from one to eight, but decreases beyond this glutamylation threshold. Glutamylation is also involved in cilia motility. Some glutamate residues at the C-terminus are monoglycylated but not polyglycylated due to the absence of functional TTLL10 in human. Monoglycylation is mainly limited to tubulin incorporated into cilia and flagella axonemes, which is required for their stability and maintenance. Flagella glycylation controls sperm motility. Both polyglutamylation and monoglycylation can coexist on the same protein on adjacent residues, and lowering glycylation levels increases polyglutamylation, and reciprocally.

The protein resides in the cytoplasm. The protein localises to the cytoskeleton. The enzyme catalyses GTP + H2O = GDP + phosphate + H(+). In terms of biological role, tubulin is the major constituent of microtubules, a cylinder consisting of laterally associated linear protofilaments composed ofalpha- and beta-tubulin heterodimers. This is Tubulin-like protein alpha-4B (TUBA4B) from Homo sapiens (Human).